Consider the following 398-residue polypeptide: Leucine aminopeptidase 1 (398 aa).

The first 20 residues, 1–20 (MKFLQTSLIAAALPAALVSG), serve as a signal peptide directing secretion. A propeptide spanning residues 21 to 87 (RFVIENEGDN…LRAWTQSQAS (67 aa)) is cleaved from the precursor. A glycan (N-linked (GlcNAc...) asparagine) is linked at asparagine 179. Histidine 187, aspartate 206, glutamate 245, and aspartate 272 together coordinate Zn(2+). A disulfide bridge links cysteine 321 with cysteine 325. Residue histidine 354 participates in Zn(2+) binding.

Belongs to the peptidase M28 family. M28E subfamily. Monomer. Requires Zn(2+) as cofactor.

It is found in the secreted. Extracellular aminopeptidase that allows assimilation of proteinaceous substrates. This is Leucine aminopeptidase 1 (lap1) from Trichoderma harzianum (Hypocrea lixii).